The primary structure comprises 200 residues: UPF0301 protein Veis_1517 (200 aa).

The protein belongs to the UPF0301 (AlgH) family.

This Verminephrobacter eiseniae (strain EF01-2) protein is UPF0301 protein Veis_1517.